Here is a 505-residue protein sequence, read N- to C-terminus: ATP synthase subunit alpha (505 aa).

ATP is bound at residue 170–177 (GDRQTGKS).

The protein belongs to the ATPase alpha/beta chains family. In terms of assembly, F-type ATPases have 2 components, CF(1) - the catalytic core - and CF(0) - the membrane proton channel. CF(1) has five subunits: alpha(3), beta(3), gamma(1), delta(1), epsilon(1). CF(0) has four main subunits: a(1), b(1), b'(1) and c(9-12).

The protein resides in the cellular thylakoid membrane. It carries out the reaction ATP + H2O + 4 H(+)(in) = ADP + phosphate + 5 H(+)(out). Functionally, produces ATP from ADP in the presence of a proton gradient across the membrane. The alpha chain is a regulatory subunit. The protein is ATP synthase subunit alpha of Prochlorococcus marinus (strain MIT 9215).